We begin with the raw amino-acid sequence, 217 residues long: MNLILMGLPGAGKGTQAEKIVNDYGIPHISTGDMFRAAMKNETELGLKAKSFIDAGDLVPDEVTIGIVKERLSEDDCENGFLLDGFPRTIAQAEALEGILSSLGKQLDHVLNIAVPKELLMERLTGRRVSPTTGKTYHIVYNPPKVEGKCDIDGSDLIQRDDDKPETVKRRLEVNEKQTKPLIDFYEAKGYLRQVDGNQDMNTVYADIKAILSEKRA.

10-15 (GAGKGT) contacts ATP. The NMP stretch occupies residues 30 to 59 (STGDMFRAAMKNETELGLKAKSFIDAGDLV). Residues Thr31, Arg36, 57 to 59 (DLV), 85 to 88 (GFPR), and Gln92 each bind AMP. An LID region spans residues 126 to 163 (GRRVSPTTGKTYHIVYNPPKVEGKCDIDGSDLIQRDDD). Residues Arg127 and 136–137 (TY) each bind ATP. Residues Arg160 and Arg171 each contribute to the AMP site. Position 199 (Gln199) interacts with ATP.

This sequence belongs to the adenylate kinase family. As to quaternary structure, monomer.

Its subcellular location is the cytoplasm. The catalysed reaction is AMP + ATP = 2 ADP. Its pathway is purine metabolism; AMP biosynthesis via salvage pathway; AMP from ADP: step 1/1. In terms of biological role, catalyzes the reversible transfer of the terminal phosphate group between ATP and AMP. Plays an important role in cellular energy homeostasis and in adenine nucleotide metabolism. The protein is Adenylate kinase of Shouchella clausii (strain KSM-K16) (Alkalihalobacillus clausii).